The sequence spans 375 residues: Pulmonary surfactant-associated protein D (375 aa).

A signal peptide spans 1–21 (MLLFLLSALVLLTQSLGYLEA). Cys-35 and Cys-40 each carry S-nitrosocysteine. The disordered stretch occupies residues 43–221 (VESGLPGRDG…DKGAKGESGL (179 aa)). In terms of domain architecture, Collagen-like spans 46 to 222 (GLPGRDGRDG…KGAKGESGLP (177 aa)). The segment covering 50–65 (RDGRDGREGPRGEKGD) has biased composition (basic and acidic residues). Pro-78 is modified (4-hydroxyproline). At Lys-87 the chain carries 5-hydroxylysine. Asn-90 carries an N-linked (GlcNAc...) asparagine glycan. Pro-96 bears the 4-hydroxyproline mark. A 5-hydroxylysine modification is found at Lys-99. The segment covering 105-114 (SGPPGPPGVP) has biased composition (pro residues). Low complexity-rich tracts occupy residues 116-132 (PAGR…IGPQ) and 138-150 (KGEA…VGAP). 4-hydroxyproline occurs at positions 171 and 177. Residues 173-189 (ERGAPGNAGAAGSAGVM) are compositionally biased toward low complexity. Residues 204 to 216 (KGDKGVPGDKGAK) show a composition bias toward basic and acidic residues. The stretch at 223-251 (DVASLRQQVEALQKQVQHLQAAFSQYKKV) forms a coiled coil. A C-type lectin domain is found at 260-374 (VGEKIFKTAG…CGEKRLVVCE (115 aa)). 2 cysteine pairs are disulfide-bonded: Cys-281-Cys-373 and Cys-351-Cys-365.

Belongs to the SFTPD family. In terms of assembly, oligomeric complex of 4 set of homotrimers. Post-translationally, hydroxylation on proline residues within the sequence motif, GXPG, is most likely to be 4-hydroxy as this fits the requirement for 4-hydroxylation in vertebrates. S-nitrosylation at Cys-35 and Cys-40 alters the quaternary structure which results in a pro-inflammatory chemoattractive signaling activity with macrophages.

The protein localises to the secreted. It is found in the extracellular space. It localises to the extracellular matrix. The protein resides in the surface film. In terms of biological role, contributes to the lung's defense against inhaled microorganisms, organic antigens and toxins. Interacts with compounds such as bacterial lipopolysaccharides, oligosaccharides and fatty acids and modulates leukocyte action in immune response. May participate in the extracellular reorganization or turnover of pulmonary surfactant. Binds strongly maltose residues and to a lesser extent other alpha-glucosyl moieties. This is Pulmonary surfactant-associated protein D (SFTPD) from Macaca mulatta (Rhesus macaque).